We begin with the raw amino-acid sequence, 428 residues long: D-amino acid dehydrogenase (428 aa).

3 to 17 serves as a coordination point for FAD; sequence VVVLGSGVVGVASAY.

The protein belongs to the DadA oxidoreductase family. Requires FAD as cofactor.

The catalysed reaction is a D-alpha-amino acid + A + H2O = a 2-oxocarboxylate + AH2 + NH4(+). It participates in amino-acid degradation; D-alanine degradation; NH(3) and pyruvate from D-alanine: step 1/1. In terms of biological role, oxidative deamination of D-amino acids. The chain is D-amino acid dehydrogenase from Burkholderia ambifaria (strain MC40-6).